Here is a 238-residue protein sequence, read N- to C-terminus: MARLAINVDHVATVRQARRASEPDPVTAAALAELAGAHGIVVHLREDRRHIQDRDVQVLRQTVKSKLNLEMAATREMIQIALNIKPEMVTLVPEKRQELTTEGGLDVVSFEGALEEAIKTLHEGGIAVSLFINPDPRHIKVAHRLEAEYVEIHTGMFAEADSYTRRQEEYERVVTSAKLARKLGLGAHAGHGIGYQNVLWLRNIPEIQEFSIGHAVIARAVLVGMERAVREMLALVNG.

Position 7 (Asn7) interacts with 3-amino-2-oxopropyl phosphate. A 1-deoxy-D-xylulose 5-phosphate-binding site is contributed by Asp9–His10. Arg18 is a binding site for 3-amino-2-oxopropyl phosphate. His43 acts as the Proton acceptor in catalysis. 2 residues coordinate 1-deoxy-D-xylulose 5-phosphate: Arg45 and His50. Glu70 functions as the Proton acceptor in the catalytic mechanism. Thr100 provides a ligand contact to 1-deoxy-D-xylulose 5-phosphate. His191 (proton donor) is an active-site residue. 3-amino-2-oxopropyl phosphate contacts are provided by residues Gly192 and Gly213 to His214.

It belongs to the PNP synthase family. As to quaternary structure, homooctamer; tetramer of dimers.

The protein localises to the cytoplasm. The catalysed reaction is 3-amino-2-oxopropyl phosphate + 1-deoxy-D-xylulose 5-phosphate = pyridoxine 5'-phosphate + phosphate + 2 H2O + H(+). It functions in the pathway cofactor biosynthesis; pyridoxine 5'-phosphate biosynthesis; pyridoxine 5'-phosphate from D-erythrose 4-phosphate: step 5/5. Its function is as follows. Catalyzes the complicated ring closure reaction between the two acyclic compounds 1-deoxy-D-xylulose-5-phosphate (DXP) and 3-amino-2-oxopropyl phosphate (1-amino-acetone-3-phosphate or AAP) to form pyridoxine 5'-phosphate (PNP) and inorganic phosphate. The protein is Pyridoxine 5'-phosphate synthase of Syntrophobacter fumaroxidans (strain DSM 10017 / MPOB).